Reading from the N-terminus, the 455-residue chain is MSRFAILVTLALAIATVSVVIAQVPPEKQFRVVNEGEFGEYITEYDASYRFIESSNQSFFTSPFQLLFYNTTPSAYILALRVGLRRDESTMRWIWDANRNNPVGENATLSLGRNGNLVLAEADGRVKWQTNTANKGVTGFQILPNGNIVLHDKNGKFVWQSFDHPTDTLLTGQSLKVNGVNKLVSRTSDSNGSDGPYSMVLDKKGLTMYVNKTGTPLVYGGWPDHDFRGTVTFAVTREFDNLTEPSAYELLLEPAPQPATNPGNNRRLLQVRPIGSGGGTLNLNKINYNGTISYLRLGSDGSLKAYSYFPAATYLKWEESFSFFSTYFVRQCGLPSFCGDYGYCDRGMCNACPTPKGLLGWSDKCAPPKTTQFCSGVKGKTVNYYKIVGVEHFTGPYVNDGQGPTSVNDCKAKCDRDCKCLGYFYKEKDKKCLLAPLLGTLIKDANTSSVAYIKY.

A signal peptide spans 1–22 (MSRFAILVTLALAIATVSVVIA). In terms of domain architecture, Bulb-type lectin spans 44 to 163 (EYDASYRFIE…NGKFVWQSFD (120 aa)). N-linked (GlcNAc...) asparagine glycans are attached at residues asparagine 56, asparagine 106, asparagine 191, asparagine 211, asparagine 241, and asparagine 289. Cysteine 374 is modified (S-nitrosocysteine). The PAN domain occupies 374 to 455 (CSGVKGKTVN…NTSSVAYIKY (82 aa)). 2 disulfide bridges follow: cysteine 410/cysteine 432 and cysteine 414/cysteine 420. Residue asparagine 446 is glycosylated (N-linked (GlcNAc...) asparagine).

The protein localises to the secreted. It is found in the cell wall. The polypeptide is EP1-like glycoprotein 2 (Arabidopsis thaliana (Mouse-ear cress)).